The sequence spans 637 residues: Threonine--tRNA ligase (637 aa).

One can recognise a TGS domain in the interval 1-61 (MIKISLKNGK…NKDCKVEILT (61 aa)). The tract at residues 242–532 (DHRKLGKELD…LIEHYAGAFP (291 aa)) is catalytic. Positions 333, 384, and 509 each coordinate Zn(2+).

Belongs to the class-II aminoacyl-tRNA synthetase family. Homodimer. The cofactor is Zn(2+).

It localises to the cytoplasm. It catalyses the reaction tRNA(Thr) + L-threonine + ATP = L-threonyl-tRNA(Thr) + AMP + diphosphate + H(+). Functionally, catalyzes the attachment of threonine to tRNA(Thr) in a two-step reaction: L-threonine is first activated by ATP to form Thr-AMP and then transferred to the acceptor end of tRNA(Thr). Also edits incorrectly charged L-seryl-tRNA(Thr). This chain is Threonine--tRNA ligase, found in Clostridium kluyveri (strain NBRC 12016).